The following is a 179-amino-acid chain: FADH(2)-dependent resorcinol hydroxylase, reductase component (179 aa).

The protein belongs to the non-flavoprotein flavin reductase family. The FADH(2)-dependent resorcinol hydroxylase is composed of two subunits, GraA (the oxygenase component) and GraD (the reductase component). Both subunits are required for activity.

The enzyme catalyses FADH2 + NAD(+) = FAD + NADH + 2 H(+). Its pathway is aromatic compound metabolism. In terms of biological role, involved in the gamma-resorcylate (2,6-dihydroxybenzoate) catabolism. Reductase component of the resorcinol hydroxylase, which catalyzes the FADPH-dependent conversion of resorcinol to hydroxyquinol. Catalyzes the reduction of FAD by NADH. The reduced flavin is then transferred to the oxygenase component GraA. The protein is FADH(2)-dependent resorcinol hydroxylase, reductase component of Rhizobium sp. (strain MTP-10005).